A 138-amino-acid chain; its full sequence is ATP synthase epsilon chain (138 aa).

This sequence belongs to the ATPase epsilon chain family. In terms of assembly, F-type ATPases have 2 components, CF(1) - the catalytic core - and CF(0) - the membrane proton channel. CF(1) has five subunits: alpha(3), beta(3), gamma(1), delta(1), epsilon(1). CF(0) has three main subunits: a, b and c.

Its subcellular location is the cell membrane. In terms of biological role, produces ATP from ADP in the presence of a proton gradient across the membrane. The polypeptide is ATP synthase epsilon chain (atpC) (Buchnera aphidicola subsp. Acyrthosiphon pisum (strain APS) (Acyrthosiphon pisum symbiotic bacterium)).